We begin with the raw amino-acid sequence, 485 residues long: Argininosuccinate lyase (485 aa).

The protein belongs to the lyase 1 family. Argininosuccinate lyase subfamily.

The protein resides in the cytoplasm. The enzyme catalyses 2-(N(omega)-L-arginino)succinate = fumarate + L-arginine. It functions in the pathway amino-acid biosynthesis; L-arginine biosynthesis; L-arginine from L-ornithine and carbamoyl phosphate: step 3/3. The sequence is that of Argininosuccinate lyase from Halobacterium salinarum (strain ATCC 29341 / DSM 671 / R1).